We begin with the raw amino-acid sequence, 445 residues long: CBL-interacting serine/threonine-protein kinase 5 (445 aa).

The Protein kinase domain occupies 12–267 (YEMGRLLGKG…IPAIMRTPWL (256 aa)). ATP-binding positions include 18–26 (LGKGTFAKV) and lysine 41. The Proton acceptor role is filled by aspartate 135. The interval 153–182 (DFGLSALPEQILQDGLLHTQCGTPAYVAPE) is activation loop. Position 157 is a phosphoserine (serine 157). Threonine 171 is subject to Phosphothreonine. One can recognise an NAF domain in the interval 307-332 (ISPKFFNAFEFISSMSSGFDLSSLFE). Residues 336 to 366 (KVQSVFTSRSSATEVMEKIETVTKEMNMKVK) are PPI.

The protein belongs to the protein kinase superfamily. CAMK Ser/Thr protein kinase family. SNF1 subfamily. The cofactor is Mn(2+).

The catalysed reaction is L-seryl-[protein] + ATP = O-phospho-L-seryl-[protein] + ADP + H(+). It carries out the reaction L-threonyl-[protein] + ATP = O-phospho-L-threonyl-[protein] + ADP + H(+). CIPK serine-threonine protein kinases interact with CBL proteins. Binding of a CBL protein to the regulatory NAF domain of CIPK protein lead to the activation of the kinase in a calcium-dependent manner. This Arabidopsis thaliana (Mouse-ear cress) protein is CBL-interacting serine/threonine-protein kinase 5 (CIPK5).